The primary structure comprises 569 residues: 2-succinyl-5-enolpyruvyl-6-hydroxy-3-cyclohexene-1-carboxylate synthase (569 aa).

It belongs to the TPP enzyme family. MenD subfamily. As to quaternary structure, homodimer. It depends on Mg(2+) as a cofactor. Mn(2+) serves as cofactor. The cofactor is thiamine diphosphate.

The catalysed reaction is isochorismate + 2-oxoglutarate + H(+) = 5-enolpyruvoyl-6-hydroxy-2-succinyl-cyclohex-3-ene-1-carboxylate + CO2. It functions in the pathway quinol/quinone metabolism; 1,4-dihydroxy-2-naphthoate biosynthesis; 1,4-dihydroxy-2-naphthoate from chorismate: step 2/7. The protein operates within cofactor biosynthesis; phylloquinone biosynthesis. In terms of biological role, catalyzes the thiamine diphosphate-dependent decarboxylation of 2-oxoglutarate and the subsequent addition of the resulting succinic semialdehyde-thiamine pyrophosphate anion to isochorismate to yield 2-succinyl-5-enolpyruvyl-6-hydroxy-3-cyclohexene-1-carboxylate (SEPHCHC). The chain is 2-succinyl-5-enolpyruvyl-6-hydroxy-3-cyclohexene-1-carboxylate synthase from Microcystis aeruginosa (strain NIES-843 / IAM M-2473).